Reading from the N-terminus, the 85-residue chain is Small ribosomal subunit protein bS16c (85 aa).

It belongs to the bacterial ribosomal protein bS16 family.

It is found in the plastid. It localises to the chloroplast. This is Small ribosomal subunit protein bS16c from Saccharum hybrid (Sugarcane).